A 493-amino-acid polypeptide reads, in one-letter code: Inosine-5'-monophosphate dehydrogenase (493 aa).

CBS domains lie at 97–155 (VIID…NAPI) and 159–219 (MTSE…AKDE). NAD(+)-binding positions include Asp253 and 303–305 (GIG). Residues Gly305 and Gly307 each coordinate K(+). Ser308 contacts IMP. Cys310 contributes to the K(+) binding site. The active-site Thioimidate intermediate is the Cys310. IMP is bound by residues 343 to 345 (DGG), 366 to 367 (GS), and 390 to 394 (YRGMG). Arg406 acts as the Proton acceptor in catalysis. Residue Glu421 participates in IMP binding. Residues Glu475, Ser476, and His477 each contribute to the K(+) site.

The protein belongs to the IMPDH/GMPR family. As to quaternary structure, homotetramer. It depends on K(+) as a cofactor.

It catalyses the reaction IMP + NAD(+) + H2O = XMP + NADH + H(+). It functions in the pathway purine metabolism; XMP biosynthesis via de novo pathway; XMP from IMP: step 1/1. Mycophenolic acid (MPA) is a non-competitive inhibitor that prevents formation of the closed enzyme conformation by binding to the same site as the amobile flap. In contrast, mizoribine monophosphate (MZP) is a competitive inhibitor that induces the closed conformation. MPA is a potent inhibitor of mammalian IMPDHs but a poor inhibitor of the bacterial enzymes. MZP is a more potent inhibitor of bacterial IMPDH. In terms of biological role, catalyzes the conversion of inosine 5'-phosphate (IMP) to xanthosine 5'-phosphate (XMP), the first committed and rate-limiting step in the de novo synthesis of guanine nucleotides, and therefore plays an important role in the regulation of cell growth. The chain is Inosine-5'-monophosphate dehydrogenase from Streptococcus pyogenes serotype M1.